A 236-amino-acid polypeptide reads, in one-letter code: MNSWNINLEDMMEAGVYLGHQARKWNPKMAPYIFAERKGIHIINLTQTARFLTEACDLLFNTAKNGEQFLIVGTKYQAADLVALTAKKSRCHYVNQKWLGGMLTNWTTIKKRLKKLQELESLESINGFDRFPKKEASNLKRQLAQLRKYLGGIRHMTKLPDIVIIIDQQHELTALKECLILGIPTICFVDTDCDPDLTDIPIPANDDSRASIQWILNKLTNSIREGRAFSKNDSIN.

It belongs to the universal ribosomal protein uS2 family.

It is found in the plastid. The protein localises to the chloroplast. This Chaetosphaeridium globosum (Charophycean green alga) protein is Small ribosomal subunit protein uS2c (rps2).